Here is a 356-residue protein sequence, read N- to C-terminus: Probable arabinogalactan endo-beta-1,4-galactanase A (356 aa).

Positions 1–21 are cleaved as a signal peptide; the sequence is MLGKTVLLPLLVLLCHSLASA. A glycan (N-linked (GlcNAc...) asparagine) is linked at Asn133. Residue Glu157 is the Proton donor of the active site. The Nucleophile role is filled by Glu268.

Belongs to the glycosyl hydrolase 53 family.

It is found in the secreted. The catalysed reaction is The enzyme specifically hydrolyzes (1-&gt;4)-beta-D-galactosidic linkages in type I arabinogalactans.. Endogalactanase involved in the degradation of plant cell wall polysaccharides, and more particularly of hairy regions of pectin. The chain is Probable arabinogalactan endo-beta-1,4-galactanase A (galA) from Aspergillus fumigatus (strain ATCC MYA-4609 / CBS 101355 / FGSC A1100 / Af293) (Neosartorya fumigata).